The following is a 190-amino-acid chain: Selenoprotein S (190 aa).

Residues 28–48 form a helical membrane-spanning segment; it reads SLLASYGWYILFSCVLLYIVI. Positions 78 to 90 are VCP/p97-interacting motif (VIM); the sequence is RQEALAAARLRMQ. The interval 96–190 is disordered; sequence QVEKHKEKQR…RRGPSSGGUS (95 aa). The segment covering 97–118 has biased composition (basic and acidic residues); it reads VEKHKEKQRQLEEEKRRQKIEM. Over residues 160–174 the composition is skewed to gly residues; sequence RGGGYNPLTGEGGGT. Sec-189 is a non-standard amino acid (selenocysteine).

This sequence belongs to the selenoprotein S family. As to quaternary structure, interacts with DERL1 and (via VIM motif) with VCP, suggesting that it forms a membrane complex with DERL1 that serves as a receptor for VCP. Also interacts with DERL2, DERL3 and SELENOK. The SELENOK-SELENOS complex interacts with VCP. Interacts with CCDC47. In terms of processing, truncated SELENOS proteins produced by failed UGA/Sec decoding are ubiquitinated by the CRL2(KLHDC2) and CRL2(KLHDC3) complexes, which recognizes the glycine (Gly) at the C-terminus of truncated SELENOS proteins. Truncated SELENOS proteins produced by failed UGA/Sec decoding are also ubiquitinated by the CRL5(KLHDC1) complex.

Its subcellular location is the endoplasmic reticulum membrane. The protein localises to the cytoplasm. Involved in the degradation process of misfolded endoplasmic reticulum (ER) luminal proteins. Participates in the transfer of misfolded proteins from the ER to the cytosol, where they are destroyed by the proteasome in a ubiquitin-dependent manner. Probably acts by serving as a linker between DERL1, which mediates the retrotranslocation of misfolded proteins into the cytosol, and the ATPase complex VCP, which mediates the translocation and ubiquitination. This Rattus norvegicus (Rat) protein is Selenoprotein S.